A 231-amino-acid polypeptide reads, in one-letter code: Augmin complex subunit dgt2 (231 aa).

A coiled-coil region spans residues glutamine 128 to glycine 199.

In terms of assembly, component of the augmin complex composed of dgt2, dgt3, dgt4, dgt5, dgt6, msd1, msd5 and wac. The complex interacts directly or indirectly with microtubules and is required for centrosome-independent generation of spindle microtubules. dgt2 interacts directly with wac (via coiled coil). In adult females, detected only in the abdomen with no expression in the head or thorax (at protein level).

It localises to the cytoplasm. The protein resides in the cytoskeleton. Its subcellular location is the spindle. It is found in the spindle pole. As part of the augmin complex, plays a role in centrosome-independent generation of spindle microtubules. The complex is required for mitotic spindle assembly through its involvement in localizing gamma-tubulin to spindle microtubules. dgt2 binds to microtubules in vitro. The protein is Augmin complex subunit dgt2 of Drosophila melanogaster (Fruit fly).